We begin with the raw amino-acid sequence, 590 residues long: FAD-linked oxidoreductase malF (590 aa).

A signal peptide spans 1 to 18 (MKYTATFALLILAIGIQT). Residues Asn44, Asn80, Asn103, Asn178, and Asn396 are each glycosylated (N-linked (GlcNAc...) asparagine). Residues 117–303 (AQGRIPLYSA…TSVTLRAFAD (187 aa)) enclose the FAD-binding PCMH-type domain.

It belongs to the oxygen-dependent FAD-linked oxidoreductase family. FAD is required as a cofactor.

Its function is as follows. FAD-linked oxidoreductase; part of the gene cluster that mediates the biosynthesis of malbrancheamide, a dichlorinated fungal indole alkaloid that belongs to a family of natural products containing a characteristic bicyclo[2.2.2]diazaoctane core. The first step of malbrancheamide biosynthesis involves coupling of L-proline and L-tryptophan by malG, a bimodular NRPS, to produce L-Pro-L-Trp aldehyde through reductive offloading. This compound undergoes spontaneous cyclization and dehydration to give a dienamine which is reverse prenylated at C-2 by malE. The other prenyltransferase present in the cluster, malB, displays modest activity, suggesting that may be a redundant gene in the pathway. Subsequently, a [4+2] Diels-Alder cyclo-addition catalyzed by the bifunctional enzyme malC forms the characteristic bicyclo[2.2.2]diazaoctane ring of premalbrancheamid. Finally, the flavin-dependent halogenase malA catalyzes the iterative dichlorination of the indole ring of premalbrancheamide to yield C-9 monochlorinated malbrancheamide B, C-8 monochlorinated isomalbrancheamide B, and dichlorinated malbrancheamide. MalA is also able to brominate premalbrancheamide at C-9 to yield malbrancheamide C, and, to a lesser extend, at C-8 to yield isomalbrancheamide C. Finally, malA can brominate C-9 monochlorinated malbrancheamide B at C-8 to yield malbrancheamide D, or C-8 monochlorinated isomalbrancheamide B at C-9 to produce isomalbrancheamide D. The sequence is that of FAD-linked oxidoreductase malF from Malbranchea aurantiaca.